Here is a 199-residue protein sequence, read N- to C-terminus: Recombination protein RecR (199 aa).

A C4-type zinc finger spans residues 58-73; the sequence is CSVCSNLTDIDPCPLC. The region spanning 81–176 is the Toprim domain; it reads TVICVVQDPR…KATRIAHGIP (96 aa).

It belongs to the RecR family.

In terms of biological role, may play a role in DNA repair. It seems to be involved in an RecBC-independent recombinational process of DNA repair. It may act with RecF and RecO. The chain is Recombination protein RecR from Ruminiclostridium cellulolyticum (strain ATCC 35319 / DSM 5812 / JCM 6584 / H10) (Clostridium cellulolyticum).